The chain runs to 1103 residues: MFLAPWPFSHLMLWFVTLGRQRGQHGLASFKLLWCLWLLVLMSLPLQVWAPPYKIGVVGPWTCDPLFSKALPEIAAQLATERINKDPALDLGHSLEYVIFNEDCQASRALSSFISHHQMASGFIGPANPGYCEAASLLGNSWDKGIFSWACVNYELDSKNSHPTFSRTLPSPIRVLLTVMKYFQWAHAGVISSDEDIWVHTAYRVASALRSRGLPVGVVLTTGQDSQSIQKALQQIRQADRIRIIIMCMHSTLIGGETQTHLLEWAHDLQMTDGTYVFVPYDTLLYSLPYKHTPYKVLRNNPKLREAYDAVLTITVESQEKTFYQAFEEAAARGEIPEKLESDQVSPLFGTIYNSIYFIAQAMNNAMKENGWASAASLVQHSRNVQFYGFNQLIRTDANGNGISEYVILDTNWKEWELHSTYTVDMETELLRFGETPIHFPGGRPPRADAQCWFADGRICQGGINPTFALMVCLALLIALLSINGFAYFIRHRINKIQLIKGPNRILLTLEDVTFINPHFGSKRGSHASVSFQITSEVQSGRSPRLSFSSGSLTPATCENSNIAIYEGDWVWLKKFPSGNFGDIKSVESSASDIFEMMKDLRHENINPLVGFFYDSGVFAIVTEFCSRRSLEDILMNQDVKLDWMFKSSLLLDLIKGMKYLHHREFAHGRLKSRNCVVDGRFVLKVTDYGFNDILETLRLSQEEPSAEELLWTAPELLRAPRGSRLRSFAGDVYSFAIIMQEVMVRGTPFCMMDLPAKEIIERIKKPPPVYRPVVPPEHAPPECLQLMKQCWAEAAEQRPTFDEIFNQFKTFNKGKKTNIIDSMLRMLEQYSSNLEDLIQERTEELEIEKQKTEKLLTQMLPPSVAESLKKGCTVEPEGFDLVTLYFSDIVGFTTISAMSEPIEVVDLLNDLYTLFDAIIGSHDVYKVETIGDAYMVASGLPKRNGMRHAAEIANMSLDILSSVGTFKMRHMPEVPVRIRIGLHSGPVVAGVVGLTMPRYCLFGDTVNTASRMESTGLPYRIHVSHSTVTILRTLGEGYEVELRGRTELKGKGTEETFWLVGKKGFTKPLPVPPPVGKDGQVGHGLQSVEIAAFQRRKQKSSW.

The N-terminal stretch at 1–46 (MFLAPWPFSHLMLWFVTLGRQRGQHGLASFKLLWCLWLLVLMSLPL) is a signal peptide. The Extracellular portion of the chain corresponds to 47-465 (QVWAPPYKIG…DGRICQGGIN (419 aa)). A disulfide bond links Cys-104 and Cys-132. Residues 466-490 (PTFALMVCLALLIALLSINGFAYFI) form a helical membrane-spanning segment. Topologically, residues 491 to 1103 (RHRINKIQLI…FQRRKQKSSW (613 aa)) are cytoplasmic. One can recognise a Protein kinase domain in the interval 532 to 812 (FQITSEVQSG…DEIFNQFKTF (281 aa)). A Guanylate cyclase domain is found at 884–1014 (TLYFSDIVGF…DTVNTASRME (131 aa)).

It belongs to the adenylyl cyclase class-4/guanylyl cyclase family. In terms of assembly, homodimer. Interacts with RD3; promotes the exit of GUCY2F from the endoplasmic reticulum and its trafficking to the photoreceptor outer segments. In terms of processing, there are 9 conserved cysteine residues in sensory guanylate cyclases, 6 in the extracellular domain, which may be involved in intra- or interchain disulfide bonds. As to expression, expressed specifically in retina.

The protein resides in the membrane. It localises to the photoreceptor outer segment membrane. It carries out the reaction GTP = 3',5'-cyclic GMP + diphosphate. With respect to regulation, activated by GUCA1B when free calcium ions concentration is low, and inhibited by GUCA1B when free calcium ions concentration is high. Inhibited by RD3. In terms of biological role, responsible for the synthesis of cyclic GMP (cGMP) in rods and cones of photoreceptors. Plays an essential role in phototransduction, by mediating cGMP replenishment. May also participate in the trafficking of membrane-asociated proteins to the photoreceptor outer segment membrane. The protein is Retinal guanylyl cyclase 2 (GUCY2F) of Bos taurus (Bovine).